The chain runs to 129 residues: Fluoride-specific ion channel FluC 2 (129 aa).

4 consecutive transmembrane segments (helical) span residues 4–24 (LDVM…WWIG), 39–59 (TFLI…LFGV), 65–85 (YGTM…TTFS), and 100–120 (GGLA…AAWL). Positions 79 and 82 each coordinate Na(+).

This sequence belongs to the fluoride channel Fluc/FEX (TC 1.A.43) family.

Its subcellular location is the cell inner membrane. The catalysed reaction is fluoride(in) = fluoride(out). Na(+) is not transported, but it plays an essential structural role and its presence is essential for fluoride channel function. In terms of biological role, fluoride-specific ion channel. Important for reducing fluoride concentration in the cell, thus reducing its toxicity. The polypeptide is Fluoride-specific ion channel FluC 2 (Brucella suis biovar 1 (strain 1330)).